Here is a 649-residue protein sequence, read N- to C-terminus: Transcription factor E2-alpha (649 aa).

4 disordered regions span residues 37–107 (RPAS…SERN), 132–207 (GLSS…AKTP), 296–325 (TYSG…SSSG), and 339–376 (DHSS…ALSP). The span at 57–71 (SESWGNSEQNSSSFD) shows a compositional bias: polar residues. Residues 132–148 (GLSSPGPLSPSGVKSSS) show a composition bias toward low complexity. Phosphoserine occurs at positions 135 and 140. The Nuclear localization signal motif lies at 171 to 177 (PKKVRKV). Residues 339-352 (DHSSNNFSPSPSTP) show a composition bias toward low complexity. T351 is modified (phosphothreonine). Residue S355 is modified to Phosphoserine. Residue R367 is modified to Omega-N-methylarginine. Phosphoserine is present on S375. Residues 385-420 (LSKMEDRLDEAIHVLRSHAVGTASELHGLLPGHSTL) are leucine-zipper. The disordered stretch occupies residues 435–547 (AGLVSGSHPE…KAEREKERRV (113 aa)). Positions 459–477 (SLPSQPSSLPDLSQRPPDS) are enriched in low complexity. K494 participates in a covalent cross-link: Glycyl lysine isopeptide (Lys-Gly) (interchain with G-Cter in SUMO2). A Phosphoserine modification is found at S524. D526 bears the Phosphothreonine mark. Over residues 537-547 (QKAEREKERRV) the composition is skewed to basic and acidic residues. The region spanning 544 to 597 (ERRVANNARERLRVRDINEAFKELGRMCQLHLSTEKPQTKLLILHQAVAVILSL) is the bHLH domain. K620 participates in a covalent cross-link: Glycyl lysine isopeptide (Lys-Gly) (interchain with G-Cter in SUMO2).

In terms of assembly, homodimer. Heterodimer; efficient DNA binding requires dimerization with another bHLH protein. Forms a heterodimer with TWIST1 and TWIST2. Forms a heterodimer with NEUROD1; the heterodimer is inhibited in presence of ID2, but not NR0B2, to E-box element. Forms a heterodimer with TCF15; the heterodimer binds E-box element. Forms a heterodimer with MYOG; heterodimerization enhances MYOG DNA-binding and transcriptional activities. Forms a heterodimer with ATOH8; repress transcription of TCF3 and TCF3-NEUROG3 dimer-induced transactivation of E box-dependent promoters. Component of a nuclear TAL-1 complex composed at least of CBFA2T3, LDB1, TAL1 and TCF3. Interacts with NEUROD2. Interacts with EP300. Interacts with PTF1A, TGFB1I1. Interacts with UBE2I. Interacts with BHLHA9. Interacts with ASB2; the interaction is mediated by SKP2 and targets TCF3 for Notch-induced proteasomal degradation. Interacts with transcription factor ASCL5/AmeloD. As to quaternary structure, interacts with RALGAPA1. Interacts with FIGLA. Forms a heterodimer with ATOH7; required for ATOH7 DNA-binding. Post-translationally, phosphorylated following NGF stimulation. In terms of processing, undergoes Notch-induced ubiquitination and subsequent proteasomal degradation which is mediated by ASB1 or ASB2, the substrate-recognition components of probable ECS E3 ubiquitin-protein ligase complexes.

It localises to the nucleus. In terms of biological role, transcriptional regulator involved in the initiation of neuronal differentiation and mesenchymal to epithelial transition. Heterodimers between TCF3 and tissue-specific basic helix-loop-helix (bHLH) proteins play major roles in determining tissue-specific cell fate during embryogenesis, like muscle or early B-cell differentiation. Together with TCF15, required for the mesenchymal to epithelial transition. Dimers bind DNA on E-box motifs: 5'-CANNTG-3'. Binds to the kappa-E2 site in the kappa immunoglobulin gene enhancer. Binds to the consensus sequence CAC/GCTGT/C present, in the chymotrypsin, insulin, AP-4, and several other gene enhancer motifs. Functionally, facilitates ATOH7 binding to DNA at the consensus sequence 5'-CAGGTG-3', and positively regulates transcriptional activity. The sequence is that of Transcription factor E2-alpha (Tcf3) from Rattus norvegicus (Rat).